We begin with the raw amino-acid sequence, 298 residues long: Protoheme IX farnesyltransferase (298 aa).

Helical transmembrane passes span I26–P46, L48–I68, F110–F130, I147–G167, V174–F194, I220–V240, L243–L263, and T276–T296.

Belongs to the UbiA prenyltransferase family. Protoheme IX farnesyltransferase subfamily. In terms of assembly, interacts with CtaA.

It localises to the cell membrane. The enzyme catalyses heme b + (2E,6E)-farnesyl diphosphate + H2O = Fe(II)-heme o + diphosphate. Its pathway is porphyrin-containing compound metabolism; heme O biosynthesis; heme O from protoheme: step 1/1. Functionally, converts heme B (protoheme IX) to heme O by substitution of the vinyl group on carbon 2 of heme B porphyrin ring with a hydroxyethyl farnesyl side group. In Symbiobacterium thermophilum (strain DSM 24528 / JCM 14929 / IAM 14863 / T), this protein is Protoheme IX farnesyltransferase.